Reading from the N-terminus, the 232-residue chain is 7-cyano-7-deazaguanine synthase (232 aa).

Position 8 to 18 (8 to 18 (FSGGQDSTTCL)) interacts with ATP. Positions 189, 198, 201, and 204 each coordinate Zn(2+).

The protein belongs to the QueC family. Requires Zn(2+) as cofactor.

It catalyses the reaction 7-carboxy-7-deazaguanine + NH4(+) + ATP = 7-cyano-7-deazaguanine + ADP + phosphate + H2O + H(+). It functions in the pathway purine metabolism; 7-cyano-7-deazaguanine biosynthesis. Functionally, catalyzes the ATP-dependent conversion of 7-carboxy-7-deazaguanine (CDG) to 7-cyano-7-deazaguanine (preQ(0)). The sequence is that of 7-cyano-7-deazaguanine synthase from Yersinia pseudotuberculosis serotype O:1b (strain IP 31758).